Consider the following 324-residue polypeptide: Glyoxylate/hydroxypyruvate reductase B (324 aa).

Active-site residues include Arg-237 and Glu-266. The Proton donor role is filled by His-285.

Belongs to the D-isomer specific 2-hydroxyacid dehydrogenase family. GhrB subfamily. In terms of assembly, homodimer.

It is found in the cytoplasm. It catalyses the reaction glycolate + NADP(+) = glyoxylate + NADPH + H(+). The catalysed reaction is (R)-glycerate + NAD(+) = 3-hydroxypyruvate + NADH + H(+). It carries out the reaction (R)-glycerate + NADP(+) = 3-hydroxypyruvate + NADPH + H(+). Catalyzes the NADPH-dependent reduction of glyoxylate and hydroxypyruvate into glycolate and glycerate, respectively. This Escherichia coli (strain K12 / MC4100 / BW2952) protein is Glyoxylate/hydroxypyruvate reductase B.